Here is an 86-residue protein sequence, read N- to C-terminus: BolA-like protein 2 (86 aa).

M1 is modified (N-acetylmethionine).

It belongs to the BolA/IbaG family. As to quaternary structure, interacts with GLRX3; forms a heterotrimeric complex composed by two BOLA2 molecules and one GLRX3 molecule; linked by [2Fe-2S] clusters.

It localises to the cytoplasm. It is found in the nucleus. Functionally, acts as a cytosolic iron-sulfur (Fe-S) cluster assembly factor that facilitates [2Fe-2S] cluster insertion into a subset of cytosolic proteins. Acts together with the monothiol glutaredoxin GLRX3. This chain is BolA-like protein 2 (Bola2), found in Mus musculus (Mouse).